A 142-amino-acid polypeptide reads, in one-letter code: Large ribosomal subunit protein uL13 (142 aa).

Belongs to the universal ribosomal protein uL13 family. Part of the 50S ribosomal subunit.

In terms of biological role, this protein is one of the early assembly proteins of the 50S ribosomal subunit, although it is not seen to bind rRNA by itself. It is important during the early stages of 50S assembly. This Alkaliphilus metalliredigens (strain QYMF) protein is Large ribosomal subunit protein uL13.